Reading from the N-terminus, the 393-residue chain is ATP phosphoribosyltransferase regulatory subunit (393 aa).

The protein belongs to the class-II aminoacyl-tRNA synthetase family. HisZ subfamily. In terms of assembly, heteromultimer composed of HisG and HisZ subunits.

Its subcellular location is the cytoplasm. It participates in amino-acid biosynthesis; L-histidine biosynthesis; L-histidine from 5-phospho-alpha-D-ribose 1-diphosphate: step 1/9. Required for the first step of histidine biosynthesis. May allow the feedback regulation of ATP phosphoribosyltransferase activity by histidine. In Chromohalobacter salexigens (strain ATCC BAA-138 / DSM 3043 / CIP 106854 / NCIMB 13768 / 1H11), this protein is ATP phosphoribosyltransferase regulatory subunit.